We begin with the raw amino-acid sequence, 379 residues long: MKNEMLALILAGGQGTRLGKLTQNIAKPAVQFGGRYRIIDFALSNCANSGIDNVGVITQYQPLVLNSHIGNGSSWGLEGINRGVTILQPFSATEGNKWFEGTSHAIYQNIDYIDSINPEYVLILSGDHIYKMDYEEMLQVHKDNMASLTVAVLDVPLKEASRFGIMNTDSNDRIVEFEEKPEHPKSTKASMGIYIFNWPRLRKMLVDSENGNIDMSDFGKNVIPAYLESGERVYTYNFNGYWKDVGTIESLWEANMEYIAENNPLDSRNRSWKIYSKNHIAPPNFISEHAEVTDSLVVDGCFVTGKVDHSILSANVHMKQGAEIKDSFIMSGAVIGEGAKINRAIIGEGAIIGNNVVIDGTDEIQVVGYNEVVGVSNEN.

Residues glycine 164, 179–180 (EK), and serine 190 each bind alpha-D-glucose 1-phosphate.

The protein belongs to the bacterial/plant glucose-1-phosphate adenylyltransferase family. As to quaternary structure, homotetramer.

It carries out the reaction alpha-D-glucose 1-phosphate + ATP + H(+) = ADP-alpha-D-glucose + diphosphate. Its pathway is glycan biosynthesis; glycogen biosynthesis. In terms of biological role, involved in the biosynthesis of ADP-glucose, a building block required for the elongation reactions to produce glycogen. Catalyzes the reaction between ATP and alpha-D-glucose 1-phosphate (G1P) to produce pyrophosphate and ADP-Glc. The sequence is that of Glucose-1-phosphate adenylyltransferase from Streptococcus uberis (strain ATCC BAA-854 / 0140J).